A 176-amino-acid chain; its full sequence is Nucleoside triphosphate/diphosphate phosphatase (176 aa).

Arg-23 (proton donor) is an active-site residue. Residues Asn-87, Asp-103, Asp-105, Asp-107, Asp-120, and Glu-123 each coordinate Mg(2+).

It belongs to the Ntdp family. It depends on Mg(2+) as a cofactor.

The catalysed reaction is a ribonucleoside 5'-triphosphate + H2O = a ribonucleoside 5'-diphosphate + phosphate + H(+). The enzyme catalyses a ribonucleoside 5'-diphosphate + H2O = a ribonucleoside 5'-phosphate + phosphate + H(+). In terms of biological role, has nucleoside phosphatase activity towards nucleoside triphosphates and nucleoside diphosphates. The sequence is that of Nucleoside triphosphate/diphosphate phosphatase from Bacillus cereus (strain B4264).